We begin with the raw amino-acid sequence, 61 residues long: Short neurotoxin 1 (61 aa).

4 disulfides stabilise this stretch: C3–C23, C17–C40, C42–C53, and C54–C59.

Belongs to the three-finger toxin family. Short-chain subfamily. Type I alpha-neurotoxin sub-subfamily. As to expression, expressed by the venom gland.

The protein localises to the secreted. Functionally, binds to muscle nicotinic acetylcholine receptor (nAChR) and inhibit acetylcholine from binding to the receptor, thereby impairing neuromuscular transmission. In terms of biological role, produces peripheral paralysis by blocking neuromuscular transmission at the postsynaptic site. Binds to the muscular nicotinic acetylcholine receptor. This is Short neurotoxin 1 from Naja annulifera (Banded Egyptian cobra).